A 291-amino-acid chain; its full sequence is N-acetylmannosamine kinase (291 aa).

ATP contacts are provided by residues 5-12 (AIDIGGTK) and 132-139 (GVGGGVVC). Positions 156, 166, 168, and 173 each coordinate Zn(2+).

The protein belongs to the ROK (NagC/XylR) family. NanK subfamily. In terms of assembly, homodimer.

The enzyme catalyses an N-acyl-D-mannosamine + ATP = an N-acyl-D-mannosamine 6-phosphate + ADP + H(+). The protein operates within amino-sugar metabolism; N-acetylneuraminate degradation; D-fructose 6-phosphate from N-acetylneuraminate: step 2/5. In terms of biological role, catalyzes the phosphorylation of N-acetylmannosamine (ManNAc) to ManNAc-6-P. This is N-acetylmannosamine kinase from Salmonella gallinarum (strain 287/91 / NCTC 13346).